The primary structure comprises 310 residues: 3,5-dioxohexanoate:acetyl-CoA acetone transferase (310 aa).

Zn(2+)-binding residues include H49, H51, and E258.

This sequence belongs to the BKACE family. Requires Zn(2+) as cofactor.

The enzyme catalyses 3,5-dioxohexanoate + acetyl-CoA = acetoacetyl-CoA + acetoacetate. Its function is as follows. Catalyzes the condensation of 3,5-dioxohexanoate and acetyl-CoA, forming acetoacetate and acetoacetyl-CoA. May be involved in fatty acid biosynthesis rescue via triacetic acid lactone. In Paraburkholderia graminis (strain ATCC 700544 / DSM 17151 / LMG 18924 / NCIMB 13744 / C4D1M), this protein is 3,5-dioxohexanoate:acetyl-CoA acetone transferase.